The primary structure comprises 136 residues: ATP synthase epsilon chain (136 aa).

It belongs to the ATPase epsilon chain family. In terms of assembly, F-type ATPases have 2 components, CF(1) - the catalytic core - and CF(0) - the membrane proton channel. CF(1) has five subunits: alpha(3), beta(3), gamma(1), delta(1), epsilon(1). CF(0) has three main subunits: a, b and c.

It localises to the cellular thylakoid membrane. Functionally, produces ATP from ADP in the presence of a proton gradient across the membrane. In Parasynechococcus marenigrum (strain WH8102), this protein is ATP synthase epsilon chain.